A 316-amino-acid chain; its full sequence is C1GALT1-specific chaperone 1 (316 aa).

At methionine 1–serine 6 the chain is on the cytoplasmic side. The chain crosses the membrane as a helical; Signal-anchor for type II membrane protein span at residues serine 7 to glycine 26. Residues histidine 27–aspartate 316 are Lumenal-facing.

The protein belongs to the glycosyltransferase 31 family. Beta3-Gal-T subfamily. In terms of assembly, associates with core 1 beta-3-galactosyltransferase (C1GALT1), probably not with the soluble active form.

It is found in the membrane. In terms of biological role, probable chaperone required for the generation of 1 O-glycan Gal-beta1-3GalNAc-alpha1-Ser/Thr (T antigen), which is a precursor for many extended O-glycans in glycoproteins. Probably acts as a specific molecular chaperone assisting the folding/stability of core 1 beta-3-galactosyltransferase (C1GALT1). This is C1GALT1-specific chaperone 1 (C1galt1c1) from Mus musculus (Mouse).